Reading from the N-terminus, the 220-residue chain is MLDGASTAPSEAERCIIAMMLMQIALDTHDEVTDDGGDLRARQLVVLAGDLYSGLYYELLARSGETALIRSFAEAVRDINEQKVRLYEKKVERIESLFAAVGTIESALLVKLADRMAAPQWGQFAYSYLLMRRLLLEQEAFIRTGASVLFEQMAQIAFPRAKTLTKEQKRHLLRFCRRYIDGCREALFAAKLPVNGLLQLRVAELSGGFQAIAKKTVEEG.

In terms of assembly, heterodimer of component I and II.

The catalysed reaction is 4 isopentenyl diphosphate + (2E,6E)-farnesyl diphosphate = all-trans-heptaprenyl diphosphate + 4 diphosphate. Functionally, supplies heptaprenyl diphosphate, the precursor for the side chain of the isoprenoid quinone menaquinone-7 (MQ-7). This is Heptaprenyl diphosphate synthase component 1 (hepS) from Geobacillus stearothermophilus (Bacillus stearothermophilus).